The following is a 103-amino-acid chain: Small ribosomal subunit protein uS10 (103 aa).

This sequence belongs to the universal ribosomal protein uS10 family. Part of the 30S ribosomal subunit.

Involved in the binding of tRNA to the ribosomes. The protein is Small ribosomal subunit protein uS10 of Buchnera aphidicola subsp. Acyrthosiphon pisum (strain 5A).